The chain runs to 303 residues: Acetylglutamate kinase (303 aa).

Substrate contacts are provided by residues 68 to 69, R90, and N194; that span reads GG.

The protein belongs to the acetylglutamate kinase family. ArgB subfamily.

The protein localises to the cytoplasm. The enzyme catalyses N-acetyl-L-glutamate + ATP = N-acetyl-L-glutamyl 5-phosphate + ADP. Its pathway is amino-acid biosynthesis; L-arginine biosynthesis; N(2)-acetyl-L-ornithine from L-glutamate: step 2/4. Catalyzes the ATP-dependent phosphorylation of N-acetyl-L-glutamate. This is Acetylglutamate kinase from Psychrobacter arcticus (strain DSM 17307 / VKM B-2377 / 273-4).